The primary structure comprises 279 residues: Nucleotide-binding protein THA_1518 (279 aa).

Position 9 to 16 (9 to 16) interacts with ATP; sequence GLSGAGKS. 57–60 provides a ligand contact to GTP; it reads DARS.

This sequence belongs to the RapZ-like family.

Functionally, displays ATPase and GTPase activities. This Thermosipho africanus (strain TCF52B) protein is Nucleotide-binding protein THA_1518.